The sequence spans 41 residues: Large ribosomal subunit protein bL36 (41 aa).

This sequence belongs to the bacterial ribosomal protein bL36 family.

The protein is Large ribosomal subunit protein bL36 (rpmJ) of Agrobacterium fabrum (strain C58 / ATCC 33970) (Agrobacterium tumefaciens (strain C58)).